Here is a 286-residue protein sequence, read N- to C-terminus: ATP synthase gamma chain (286 aa).

Belongs to the ATPase gamma chain family. In terms of assembly, F-type ATPases have 2 components, CF(1) - the catalytic core - and CF(0) - the membrane proton channel. CF(1) has five subunits: alpha(3), beta(3), gamma(1), delta(1), epsilon(1). CF(0) has three main subunits: a, b and c.

It localises to the cell inner membrane. Produces ATP from ADP in the presence of a proton gradient across the membrane. The gamma chain is believed to be important in regulating ATPase activity and the flow of protons through the CF(0) complex. This Christiangramia forsetii (strain DSM 17595 / CGMCC 1.15422 / KT0803) (Gramella forsetii) protein is ATP synthase gamma chain.